Here is a 241-residue protein sequence, read N- to C-terminus: Large ribosomal subunit protein uL13c (241 aa).

The transit peptide at 1–50 (MAVLCSSSTVILSSSSVKSSGSERKSPFLGFSLTAISKPSVRVGIYANSK) directs the protein to the chloroplast.

This sequence belongs to the universal ribosomal protein uL13 family. Part of the 50S ribosomal subunit.

Its subcellular location is the plastid. It is found in the chloroplast. In Arabidopsis thaliana (Mouse-ear cress), this protein is Large ribosomal subunit protein uL13c (RPL13).